A 463-amino-acid polypeptide reads, in one-letter code: Tryprostatin B synthase (463 aa).

Brevianamide F is bound by residues Met-93 and Glu-101. Positions 112, 200, and 202 each coordinate dimethylallyl diphosphate. Residue Tyr-204 coordinates brevianamide F. 6 residues coordinate dimethylallyl diphosphate: Lys-293, Tyr-295, Gln-379, Tyr-381, Tyr-445, and Tyr-449.

This sequence belongs to the tryptophan dimethylallyltransferase family.

The catalysed reaction is brevianamide F + dimethylallyl diphosphate = tryprostatin B + diphosphate. The protein operates within mycotoxin biosynthesis. Functionally, brevianamide F prenyltransferase; part of the gene cluster that mediates the biosynthesis of fumitremorgins, indole alkaloids that carry not only intriguing chemical structures, but also interesting biological and pharmacological activities. The biosynthesis of fumitremorgin-type alkaloids begins by condensation of the two amino acids L-tryptophan and L-proline to brevianamide F, catalyzed by the non-ribosomal peptide synthetase ftmPS/ftmA. Brevianamide F is then prenylated by the prenyltransferase ftmPT1/ftmB in the presence of dimethylallyl diphosphate, resulting in the formation of tryprostatin B. The three cytochrome P450 monooxygenases, ftmP450-1/ftmC, ftmP450-2/ftmE and ftmP450-3/FtmG, are responsible for the conversion of tryprostatin B to 6-hydroxytryprostatin B, tryprostatin A to fumitremorgin C and fumitremorgin C to 12,13-dihydroxyfumitremorgin C, respectively. The putative methyltransferase ftmMT/ftmD is expected for the conversion of 6-hydroxytryprostatin B to tryprostatin A. FtmPT2/FtmH catalyzes the prenylation of 12,13-dihydroxyfumitre-morgin C in the presence of dimethylallyl diphosphate, resulting in the formation of fumitremorgin B. Fumitremorgin B is further converted to verruculogen by ftmOx1/ftmF via the insertion of an endoperoxide bond between the two prenyl moieties. Finally, verruculogen is further converted to fumitremorgin A by the verruculogen prenyltransferase ftmPT3. The protein is Tryprostatin B synthase of Neosartorya fischeri (strain ATCC 1020 / DSM 3700 / CBS 544.65 / FGSC A1164 / JCM 1740 / NRRL 181 / WB 181) (Aspergillus fischerianus).